Consider the following 866-residue polypeptide: Retinoblastoma-related protein 2 (866 aa).

Residues 274–475 (TPITSAMTTA…EKGSSLYNSL (202 aa)) form a domain A region. The pocket stretch occupies residues 274–721 (TPITSAMTTA…NEVFVPAAKP (448 aa)). The tract at residues 476–593 (IVARPSVASE…PVGGNEKCAD (118 aa)) is spacer. A disordered region spans residues 513-551 (LPATPSKKRAAGRDDNADPRSPKRPCNESRSPVVEHNLQ). Basic and acidic residues predominate over residues 523-539 (AGRDDNADPRSPKRPCN). The domain B stretch occupies residues 594-721 (VTIQIFFSKI…NEVFVPAAKP (128 aa)). Disordered regions lie at residues 731 to 754 (TRPEDKKNASGQVPGSPKLSPFPN) and 839 to 866 (SLGQPNGGSTSLDPAAAFSPLSKRKPDT). The segment covering 841–850 (GQPNGGSTSL) has biased composition (polar residues).

This sequence belongs to the retinoblastoma protein (RB) family. As to expression, ubiquitous.

It localises to the nucleus. In terms of biological role, regulator of biological processes that recruits a histone deacetylase to control gene transcription. May play a role in the entry into mitosis, negatively regulating the cell proliferation. Formation of stable complexes with geminiviridae replication-associated proteins may create a cellular environment which favors viral DNA replication. This Zea mays (Maize) protein is Retinoblastoma-related protein 2 (RBR2).